Reading from the N-terminus, the 35-residue chain is Dermonecrotic toxin LgSicTox-beta-LOXN4 (35 aa).

Asp20 is a Mg(2+) binding site.

The protein belongs to the arthropod phospholipase D family. Class II subfamily. Mg(2+) is required as a cofactor. Post-translationally, contains 2 disulfide bonds. As to expression, expressed by the venom gland.

It localises to the secreted. It catalyses the reaction an N-(acyl)-sphingosylphosphocholine = an N-(acyl)-sphingosyl-1,3-cyclic phosphate + choline. The catalysed reaction is an N-(acyl)-sphingosylphosphoethanolamine = an N-(acyl)-sphingosyl-1,3-cyclic phosphate + ethanolamine. The enzyme catalyses a 1-acyl-sn-glycero-3-phosphocholine = a 1-acyl-sn-glycero-2,3-cyclic phosphate + choline. It carries out the reaction a 1-acyl-sn-glycero-3-phosphoethanolamine = a 1-acyl-sn-glycero-2,3-cyclic phosphate + ethanolamine. In terms of biological role, dermonecrotic toxins cleave the phosphodiester linkage between the phosphate and headgroup of certain phospholipids (sphingolipid and lysolipid substrates), forming an alcohol (often choline) and a cyclic phosphate. This toxin acts on sphingomyelin (SM). It may also act on ceramide phosphoethanolamine (CPE), lysophosphatidylcholine (LPC) and lysophosphatidylethanolamine (LPE), but not on lysophosphatidylserine (LPS), and lysophosphatidylglycerol (LPG). It acts by transphosphatidylation, releasing exclusively cyclic phosphate products as second products. Induces dermonecrosis, hemolysis, increased vascular permeability, edema, inflammatory response, and platelet aggregation. The protein is Dermonecrotic toxin LgSicTox-beta-LOXN4 of Loxosceles gaucho (Spider).